The primary structure comprises 66 residues: Large ribosomal subunit protein uL29 (66 aa).

Belongs to the universal ribosomal protein uL29 family.

The polypeptide is Large ribosomal subunit protein uL29 (Pseudothermotoga lettingae (strain ATCC BAA-301 / DSM 14385 / NBRC 107922 / TMO) (Thermotoga lettingae)).